Here is a 532-residue protein sequence, read N- to C-terminus: 4-amino-L-phenylalanyl-[CmlP-peptidyl-carrier-protein] 3-hydroxylase (532 aa).

Fe cation contacts are provided by His-305, His-307, Asp-309, His-310, Glu-377, and Asp-403.

This sequence belongs to the metallo-beta-lactamase superfamily. In terms of assembly, homodimer. Fe(2+) is required as a cofactor.

It catalyses the reaction 4-amino-L-phenylalanyl-[peptidyl-carrier protein] + AH2 + O2 = (2R)-2-(4-aminophenyl)-L-seryl-[peptidyl-carrier protein] + A + H2O. Its pathway is antibiotic biosynthesis. Involved in chloramphenicol biosynthesis. Catalyzes the beta-hydroxylation of 4-amino-L-phenylalanine (L-PAPA) covalently bound to CmlP to form L-p-aminophenylserine. The polypeptide is 4-amino-L-phenylalanyl-[CmlP-peptidyl-carrier-protein] 3-hydroxylase (Streptomyces venezuelae (strain ATCC 10712 / CBS 650.69 / DSM 40230 / JCM 4526 / NBRC 13096 / PD 04745)).